The chain runs to 102 residues: Small ribosomal subunit protein uS10 (102 aa).

Belongs to the universal ribosomal protein uS10 family. Part of the 30S ribosomal subunit.

In terms of biological role, involved in the binding of tRNA to the ribosomes. The sequence is that of Small ribosomal subunit protein uS10 from Sulfurisphaera tokodaii (strain DSM 16993 / JCM 10545 / NBRC 100140 / 7) (Sulfolobus tokodaii).